The sequence spans 1238 residues: DNA-directed RNA polymerase subunit beta (1238 aa).

The interval 1186 to 1238 is disordered; that stretch reads IEGREDTPPEEVYEEGYEEGFEEESEELPEDIDFEPDSFDIENDDLDLEDFDI. Residues 1193–1238 are compositionally biased toward acidic residues; sequence PPEEVYEEGYEEGFEEESEELPEDIDFEPDSFDIENDDLDLEDFDI.

Belongs to the RNA polymerase beta chain family. As to quaternary structure, the RNAP catalytic core consists of 2 alpha, 1 beta, 1 beta' and 1 omega subunit. When a sigma factor is associated with the core the holoenzyme is formed, which can initiate transcription.

The enzyme catalyses RNA(n) + a ribonucleoside 5'-triphosphate = RNA(n+1) + diphosphate. Functionally, DNA-dependent RNA polymerase catalyzes the transcription of DNA into RNA using the four ribonucleoside triphosphates as substrates. In Thermoanaerobacter sp. (strain X514), this protein is DNA-directed RNA polymerase subunit beta.